A 419-amino-acid chain; its full sequence is MIFDKDNFQEYDKELWDAIHAEEERQEHNIELIASENVVSKAVMKAQGTLLTNKYAEGYPGKRYYGGTEWVDVVENLAIERAKTLFGAKFANVQAHSGSQANAAAYMALIESGDTVLGMDLAAGGHLTHGSPVNFSGKTYNFVGYSVDKETEMLDYEAILEQAKEVKPKLIVAGASAYSRIIDFKKFREIADEVGAYLMVDMAHIAGLVATGLHPSPVAYADVTTSTTHKTLRGPRGGLILTNDEGLAKKINSAVFPGLQGGPLEHVIAAKAVSFKEALDPAFTDYAKQVVANTAAMANVFAEDNRFRLISGGTDNHVFLVEVTGVIESGKAAQNLLDEVNITLNKNSIPFETLSPFKTSGIRIGCAAITSRGMGVEESQQIAQLIIKALVNHDNSSILEEVRQEVRTITDRFPLYENL.

Residues Leu121 and 125–127 (GHL) contribute to the (6S)-5,6,7,8-tetrahydrofolate site. Residue Lys230 is modified to N6-(pyridoxal phosphate)lysine. A (6S)-5,6,7,8-tetrahydrofolate-binding site is contributed by 355–357 (SPF).

This sequence belongs to the SHMT family. As to quaternary structure, homodimer. Pyridoxal 5'-phosphate serves as cofactor.

Its subcellular location is the cytoplasm. The catalysed reaction is (6R)-5,10-methylene-5,6,7,8-tetrahydrofolate + glycine + H2O = (6S)-5,6,7,8-tetrahydrofolate + L-serine. The protein operates within one-carbon metabolism; tetrahydrofolate interconversion. It functions in the pathway amino-acid biosynthesis; glycine biosynthesis; glycine from L-serine: step 1/1. Functionally, catalyzes the reversible interconversion of serine and glycine with tetrahydrofolate (THF) serving as the one-carbon carrier. This reaction serves as the major source of one-carbon groups required for the biosynthesis of purines, thymidylate, methionine, and other important biomolecules. Also exhibits THF-independent aldolase activity toward beta-hydroxyamino acids, producing glycine and aldehydes, via a retro-aldol mechanism. The protein is Serine hydroxymethyltransferase of Streptococcus uberis (strain ATCC BAA-854 / 0140J).